A 477-amino-acid chain; its full sequence is Tripartite motif-containing protein 72 (477 aa).

Residues Cys-14, Cys-17, Cys-29, His-31, Cys-34, Cys-37, Cys-53, Cys-56, Cys-86, His-89, Cys-97, Asp-100, Cys-105, Cys-108, His-114, and His-117 each coordinate Zn(2+). The RING-type zinc-finger motif lies at Cys-14–Gln-57. The segment at Val-81–Ala-122 adopts a B box-type zinc-finger fold. Residues Gln-135–Lys-232 are a coiled coil. Ser-255 is modified (phosphoserine). One can recognise a B30.2/SPRY domain in the interval Asp-271–Gln-475.

It belongs to the TRIM/RBCC family. Homodimer. Homooligomer; disulfide-linked. Oligomerizes on the phospholipid membrane. Interacts with DYSF and CAV3. In terms of processing, disulfide bond formation at Cys-242 occurs in case of membrane damage that cause the entry of the oxidized milieu of the extracellular space, resulting in homooligomerization. As to expression, muscle-specific.

Its subcellular location is the cell membrane. It localises to the sarcolemma. It is found in the cytoplasmic vesicle membrane. The enzyme catalyses S-ubiquitinyl-[E2 ubiquitin-conjugating enzyme]-L-cysteine + [acceptor protein]-L-lysine = [E2 ubiquitin-conjugating enzyme]-L-cysteine + N(6)-ubiquitinyl-[acceptor protein]-L-lysine.. It participates in protein modification; protein ubiquitination. Specifically binds phosphatidylserine. The binding to phospholipids enhances ubiquitination activity. Functionally, muscle-specific E3 ubiquitin-protein ligase that plays a central role in cell membrane repair by nucleating the assembly of the repair machinery at injury sites. Its ubiquitination activity is mediated by E2 ubiquitin-conjugating enzymes UBE2D1, UBE2D2 and UBE2D3. Acts as a sensor of oxidation: upon membrane damage, entry of extracellular oxidative environment results in disulfide bond formation and homooligomerization at the injury site. This oligomerization acts as a nucleation site for recruitment of TRIM72-containing vesicles to the injury site, leading to membrane patch formation. Probably acts upstream of the Ca(2+)-dependent membrane resealing process. Required for transport of DYSF to sites of cell injury during repair patch formation. Regulates membrane budding and exocytosis. May be involved in the regulation of the mobility of KCNB1-containing endocytic vesicles. The sequence is that of Tripartite motif-containing protein 72 from Oryctolagus cuniculus (Rabbit).